The sequence spans 156 residues: Small ribosomal subunit protein uS7 (156 aa).

This sequence belongs to the universal ribosomal protein uS7 family. As to quaternary structure, part of the 30S ribosomal subunit. Contacts proteins S9 and S11.

Its function is as follows. One of the primary rRNA binding proteins, it binds directly to 16S rRNA where it nucleates assembly of the head domain of the 30S subunit. Is located at the subunit interface close to the decoding center, probably blocks exit of the E-site tRNA. The sequence is that of Small ribosomal subunit protein uS7 from Streptococcus suis (strain 98HAH33).